Here is an 85-residue protein sequence, read N- to C-terminus: High affinity immunoglobulin epsilon receptor subunit gamma (85 aa).

The first 18 residues, 1–18, serve as a signal peptide directing secretion; that stretch reads MIPAVVLLLLLLVEQAAA. The Extracellular portion of the chain corresponds to 19 to 23; that stretch reads LGEPQ. The chain crosses the membrane as a helical span at residues 24-44; that stretch reads LCYILDAILFLYGIVLTLLYC. Residues 45–85 lie on the Cytoplasmic side of the membrane; the sequence is RLKLQVRKAATASEKSDGIYTGLSTRTQETYETLKHEKPPQ. An ITAM domain is found at 53–81; that stretch reads AATASEKSDGIYTGLSTRTQETYETLKHE. A Phosphotyrosine modification is found at Tyr-64. Ser-68 carries the post-translational modification Phosphoserine. Residue Tyr-75 is modified to Phosphotyrosine. The residue at position 77 (Thr-77) is a Phosphothreonine.

It belongs to the CD3Z/FCER1G family. In terms of assembly, igE Fc receptor is a tetramer of an alpha chain, a beta chain, and two disulfide linked gamma chains. Associates with FCGR1A; forms a functional signaling complex. The signaling subunit of immunoglobulin gamma (IgG) Fc receptor complex. As a homodimer or a heterodimer of CD247 and FCER1G, associates with the ligand binding subunit FCGR3A to form a functional receptor complex. Associates with CLEC6A. Interacts with CLEC4E. Interacts (via ITAM domain) with SYK (via SH2 domains); activates SYK, enabling integrin-mediated activation of neutrophils and macrophages. Interacts with CSF2RB and recruits SYK in response to IL3 stimulation; this interaction is direct. Interacts with CD300LH; the interaction may be indirect. Interacts with CD300LD. Interacts with TARM1.

It localises to the cell membrane. Adapter protein containing an immunoreceptor tyrosine-based activation motif (ITAM) that transduces activation signals from various immunoreceptors. As a component of the high-affinity immunoglobulin E (IgE) receptor, mediates allergic inflammatory signaling in mast cells. As a constitutive component of interleukin-3 receptor complex, selectively mediates interleukin 4/IL4 production by basophils priming T-cells toward effector T-helper 2 subset. Associates with pattern recognition receptors CLEC4D and CLEC4E to form a functional signaling complex in myeloid cells. Binding of mycobacterial trehalose 6,6'-dimycolate (TDM) to this receptor complex leads to phosphorylation of ITAM, triggering activation of SYK, CARD9 and NF-kappa-B, consequently driving maturation of antigen-presenting cells and shaping antigen-specific priming of T-cells toward effector T-helper 1 and T-helper 17 cell subtypes. May function cooperatively with other activating receptors. Functionally linked to integrin beta-2/ITGB2-mediated neutrophil activation. Also involved in integrin alpha-2/ITGA2-mediated platelet activation. In Bos taurus (Bovine), this protein is High affinity immunoglobulin epsilon receptor subunit gamma (FCER1G).